An 837-amino-acid polypeptide reads, in one-letter code: Vacuolar membrane protease (837 aa).

Residues 1 to 36 (MSEEEVHDTSSEASEVFTNQPNAFVRGVRSIFGYRK) lie on the Cytoplasmic side of the membrane. A helical membrane pass occupies residues 37–57 (TSLTLFVILTIVVTAGLSFYD). Residues 58 to 355 (NSLELTIELP…FATPISALAR (298 aa)) lie on the Vacuolar side of the membrane. Asparagine 143 is a glycosylation site (N-linked (GlcNAc...) asparagine). Histidine 157 and aspartate 169 together coordinate Zn(2+). Glutamate 201 functions as the Proton acceptor in the catalytic mechanism. The Zn(2+) site is built by glutamate 202, glutamate 227, and histidine 299. A helical transmembrane segment spans residues 356–376 (VNLVLLVLFPVVSTPLLFVIV). Residues 377–384 (KYKKWKLR) are Cytoplasmic-facing. A helical transmembrane segment spans residues 385–405 (VTNFLGVPLAMGLAVAVGQVG). The Vacuolar segment spans residues 406–415 (NPMLVSSHPM). The chain crosses the membrane as a helical span at residues 416-436 (MVVATTTSIVVLVYYVVLNGV). The Cytoplasmic segment spans residues 437 to 446 (DWVNTSSDQK). The chain crosses the membrane as a helical span at residues 447-467 (LVTMIEVSFVYWVVLVYVTWS). Residues 468-474 (GGDHTGE) are Vacuolar-facing. The chain crosses the membrane as a helical span at residues 475 to 495 (FGVTVLFFVQASTSLLGLIGW). Residues 496–539 (TFTRVRGGDEPLLSGEEERYGTEDERDTEKPLVEHNYDWSLQYL) are Cytoplasmic-facing. A helical membrane pass occupies residues 540–560 (LIVPVSSLVVYNSGWLVLEGV). Asparagine 561 carries N-linked (GlcNAc...) asparagine glycosylation. Topologically, residues 561 to 572 (NKTVQESLASEH) are vacuolar. Residues 573 to 593 (LIYWIVVVFSQFLVLPVVPFI) traverse the membrane as a helical segment. The Cytoplasmic segment spans residues 594 to 598 (TKFNR). A helical transmembrane segment spans residues 599–619 (YIVLGLSVVAVVGVLMSMAVH). Topologically, residues 620–837 (PFNQGSPMKL…LVGVVKHVDV (218 aa)) are vacuolar. Asparagine 689 carries an N-linked (GlcNAc...) asparagine glycan.

This sequence belongs to the peptidase M28 family. Requires Zn(2+) as cofactor.

It is found in the vacuole membrane. May be involved in vacuolar sorting and osmoregulation. The protein is Vacuolar membrane protease of Candida albicans (strain WO-1) (Yeast).